A 138-amino-acid polypeptide reads, in one-letter code: Nucleoside diphosphate kinase (138 aa).

Positions 9, 57, 85, 91, 102, and 112 each coordinate ATP. The active-site Pros-phosphohistidine intermediate is H120.

It belongs to the NDK family. As to quaternary structure, homotetramer. Mg(2+) serves as cofactor.

The protein localises to the cytoplasm. The catalysed reaction is a 2'-deoxyribonucleoside 5'-diphosphate + ATP = a 2'-deoxyribonucleoside 5'-triphosphate + ADP. The enzyme catalyses a ribonucleoside 5'-diphosphate + ATP = a ribonucleoside 5'-triphosphate + ADP. Functionally, major role in the synthesis of nucleoside triphosphates other than ATP. The ATP gamma phosphate is transferred to the NDP beta phosphate via a ping-pong mechanism, using a phosphorylated active-site intermediate. The polypeptide is Nucleoside diphosphate kinase (Streptococcus agalactiae serotype V (strain ATCC BAA-611 / 2603 V/R)).